The following is a 172-amino-acid chain: Large ribosomal subunit protein uL10 (172 aa).

The protein belongs to the universal ribosomal protein uL10 family. Part of the ribosomal stalk of the 50S ribosomal subunit. The N-terminus interacts with L11 and the large rRNA to form the base of the stalk. The C-terminus forms an elongated spine to which L12 dimers bind in a sequential fashion forming a multimeric L10(L12)X complex.

In terms of biological role, forms part of the ribosomal stalk, playing a central role in the interaction of the ribosome with GTP-bound translation factors. The chain is Large ribosomal subunit protein uL10 from Chlorobium luteolum (strain DSM 273 / BCRC 81028 / 2530) (Pelodictyon luteolum).